The primary structure comprises 213 residues: MSETYDFLFKFLVIGNAGTGKSCLLHQFIEKRFKDDSNHTIGVEFGSKIISVVNKFVKLQIWDTAGQERFRSVTRSYYRGAAGALLVYDITSRETYNALTNWLTDARMLASQNIVIILCGNKKDLDADREVTFLEASRFAQENELMFLETSALTGENVEEAFVQCARKILNKIESGELDPERMGSGIQYGDAALRQLRSPRRAQAESIQECGC.

Positions 18, 19, 20, 21, 22, 23, 37, 39, and 40 each coordinate GTP. Residue Ser-22 coordinates Mg(2+). Positions His-39 to Glu-44 match the Switch 1 motif. Mg(2+) contacts are provided by Thr-40 and Asp-63. The short motif at Ala-65–Thr-74 is the Switch 2 element. Residues Gly-66, Asn-121, Lys-122, Asp-124, Ala-152, and Leu-153 each contribute to the GTP site. Residues Cys-211 and Cys-213 are each lipidated (S-geranylgeranyl cysteine). Cys-213 carries the post-translational modification Cysteine methyl ester.

It belongs to the small GTPase superfamily. Rab family. Mg(2+) serves as cofactor.

It is found in the membrane. Its subcellular location is the cytoplasm. The protein localises to the early endosome membrane. It localises to the recycling endosome membrane. It catalyses the reaction GTP + H2O = GDP + phosphate + H(+). Regulated by guanine nucleotide exchange factors (GEFs) which promote the exchange of bound GDP for free GTP. Regulated by GTPase activating proteins (GAPs) which increase the GTP hydrolysis activity. Inhibited by GDP dissociation inhibitors (GDIs). The small GTPases Rab are key regulators of intracellular membrane trafficking, from the formation of transport vesicles to their fusion with membranes. Rabs cycle between an inactive GDP-bound form and an active GTP-bound form that is able to recruit to membranes different sets of downstream effectors directly responsible for vesicle formation, movement, tethering and fusion. RAB4A is involved in protein transport. Also plays a role in vesicular traffic. Mediates VEGFR2 endosomal trafficking to enhance VEGFR2 signaling. Acts as a regulator of platelet alpha-granule release during activation and aggregation of platelets. In Danio rerio (Zebrafish), this protein is Ras-related protein Rab-4A (rab4a).